Here is a 481-residue protein sequence, read N- to C-terminus: uncharacterized protein (481 aa).

This is an uncharacterized protein from Cryphonectria parasitica (Chestnut blight fungus).